The primary structure comprises 82 residues: Small ribosomal subunit protein uS17 (82 aa).

It belongs to the universal ribosomal protein uS17 family. In terms of assembly, part of the 30S ribosomal subunit.

One of the primary rRNA binding proteins, it binds specifically to the 5'-end of 16S ribosomal RNA. The protein is Small ribosomal subunit protein uS17 of Bradyrhizobium diazoefficiens (strain JCM 10833 / BCRC 13528 / IAM 13628 / NBRC 14792 / USDA 110).